We begin with the raw amino-acid sequence, 252 residues long: 5-oxoprolinase subunit A (252 aa).

It belongs to the LamB/PxpA family. In terms of assembly, forms a complex composed of PxpA, PxpB and PxpC.

It catalyses the reaction 5-oxo-L-proline + ATP + 2 H2O = L-glutamate + ADP + phosphate + H(+). Functionally, catalyzes the cleavage of 5-oxoproline to form L-glutamate coupled to the hydrolysis of ATP to ADP and inorganic phosphate. This chain is 5-oxoprolinase subunit A, found in Kocuria rhizophila (strain ATCC 9341 / DSM 348 / NBRC 103217 / DC2201).